The following is a 320-amino-acid chain: Pyrroline-5-carboxylate reductase 2 (320 aa).

Position 2 is an N-acetylserine (Ser-2). Residues 6 to 11 and Ser-34 contribute to the NADP(+) site; that span reads IGAGQL. NADPH is bound by residues Ala-8, Gln-10, Leu-11, Ser-34, Glu-36, Asn-56, Val-70, Lys-71, and Ala-97. Residues Asn-56, 69–72, and 95–97 contribute to the NADP(+) site; these read AVKP and CAA. Glu-164 is a binding site for L-proline. Position 230 (Asn-230) interacts with NADPH. The L-proline site is built by Ala-237 and Thr-238. The segment at 293–320 is disordered; it reads ESPTVSTLAPPSSGKLLTRNPAQGSKRE. Ser-304 carries the post-translational modification Phosphoserine.

It belongs to the pyrroline-5-carboxylate reductase family. As to quaternary structure, homodecamer; composed of 5 homodimers. Interacts with LTO1.

It is found in the cytoplasm. The protein localises to the mitochondrion. The catalysed reaction is L-proline + NADP(+) = (S)-1-pyrroline-5-carboxylate + NADPH + 2 H(+). It carries out the reaction L-proline + NAD(+) = (S)-1-pyrroline-5-carboxylate + NADH + 2 H(+). The protein operates within amino-acid biosynthesis; L-proline biosynthesis; L-proline from L-glutamate 5-semialdehyde: step 1/1. In terms of biological role, oxidoreductase that catalyzes the last step in proline biosynthesis, which corresponds to the reduction of pyrroline-5-carboxylate to L-proline using NAD(P)H. At physiologic concentrations, has higher specific activity in the presence of NADH. Involved in cellular response to oxidative stress. In some cell types, such as erythrocytes, its primary function may be the generation of NADP(+). The chain is Pyrroline-5-carboxylate reductase 2 from Rattus norvegicus (Rat).